Consider the following 236-residue polypeptide: Leucyl/phenylalanyl-tRNA--protein transferase (236 aa).

Belongs to the L/F-transferase family.

The protein localises to the cytoplasm. It carries out the reaction N-terminal L-lysyl-[protein] + L-leucyl-tRNA(Leu) = N-terminal L-leucyl-L-lysyl-[protein] + tRNA(Leu) + H(+). The catalysed reaction is N-terminal L-arginyl-[protein] + L-leucyl-tRNA(Leu) = N-terminal L-leucyl-L-arginyl-[protein] + tRNA(Leu) + H(+). It catalyses the reaction L-phenylalanyl-tRNA(Phe) + an N-terminal L-alpha-aminoacyl-[protein] = an N-terminal L-phenylalanyl-L-alpha-aminoacyl-[protein] + tRNA(Phe). In terms of biological role, functions in the N-end rule pathway of protein degradation where it conjugates Leu, Phe and, less efficiently, Met from aminoacyl-tRNAs to the N-termini of proteins containing an N-terminal arginine or lysine. This chain is Leucyl/phenylalanyl-tRNA--protein transferase, found in Shewanella sp. (strain MR-4).